Here is a 1406-residue protein sequence, read N- to C-terminus: Protein crumbs homolog 1 (1406 aa).

A signal peptide spans M1–S25. Residues F26 to T1347 lie on the Extracellular side of the membrane. N30, N41, and N42 each carry an N-linked (GlcNAc...) asparagine glycan. 3 consecutive EGF-like domains span residues N30–D68, M70–E108, and T110–E146. Disulfide bonds link C34-C45, C39-C54, C56-C67, C74-C85, C79-C96, C98-C107, C114-C125, C119-C134, C136-C145, C152-C163, C157-C172, C174-C183, C190-C201, C195-C210, C212-C221, C228-C239, C233-C248, C250-C259, C266-C277, and C271-C286. The 37-residue stretch at D148 to D184 folds into the EGF-like 4; calcium-binding domain. Positions E186–E222 constitute an EGF-like 5; calcium-binding domain. N215 is a glycosylation site (N-linked (GlcNAc...) asparagine). Residues E224–E260 form the EGF-like 6; calcium-binding domain. Residues N262–E299 enclose the EGF-like 7; calcium-binding domain. N-linked (GlcNAc...) asparagine glycosylation is present at N287. Intrachain disulfides connect C288-C298, C305-C316, C310-C325, C327-C336, C343-C354, C348-C383, C385-C394, C401-C412, C406-C421, C423-C438, C445-C456, C450-C469, and C471-C480. 2 EGF-like domains span residues L301 to E337 and D339 to E395. N313 and N322 each carry an N-linked (GlcNAc...) asparagine glycan. Residues D397–S439 form the EGF-like 10; calcium-binding domain. Residues N418, N427, and N453 are each glycosylated (N-linked (GlcNAc...) asparagine). The EGF-like 11 domain occupies I441–E481. One can recognise a Laminin G-like 1 domain in the interval T485–C670. N550, N561, and N657 each carry an N-linked (GlcNAc...) asparagine glycan. 4 cysteine pairs are disulfide-bonded: C642–C670, C676–C687, C681–C696, and C698–C707. The EGF-like 12 domain maps to R672–L708. The 172-residue stretch at G714–C885 folds into the Laminin G-like 2 domain. Residues N757, N871, and N880 are each glycosylated (N-linked (GlcNAc...) asparagine). 6 disulfide bridges follow: C851-C885, C891-C902, C896-C911, C913-C922, C928-C939, and C933-C948. EGF-like domains are found at residues G887–E923 and E924–Q960. Positions A950–C1137 constitute a Laminin G-like 3 domain. Residues N968, N975, and N1000 are each glycosylated (N-linked (GlcNAc...) asparagine). 16 disulfides stabilise this stretch: C1096–C1137, C1143–C1154, C1148–C1163, C1165–C1174, C1181–C1191, C1186–C1200, C1202–C1211, C1218–C1229, C1223–C1238, C1240–C1249, C1259–C1274, C1268–C1283, C1285–C1294, C1301–C1312, C1306–C1321, and C1323–C1332. Residues Q1139–E1175 form the EGF-like 15 domain. The 36-residue stretch at N1177 to E1212 folds into the EGF-like 16; calcium-binding domain. A glycan (N-linked (GlcNAc...) asparagine) is linked at N1190. 2 consecutive EGF-like domains span residues D1214–R1250 and P1255–E1295. N-linked (GlcNAc...) asparagine glycosylation is found at N1243, N1265, and N1273. Residues D1297–E1333 form the EGF-like 19; calcium-binding domain. The chain crosses the membrane as a helical span at residues I1348–V1368. The Cytoplasmic portion of the chain corresponds to T1369–I1406. Residues S1370–I1406 form an interaction with EPB41L5 region.

It belongs to the Crumbs protein family. In terms of assembly, component of a complex composed of PALS1, CRB1 and EPB41L5. Within the complex, interacts (via intracellular domain) with PALS1 and EPB41L5 (via FERM domain). Forms a complex with MPP4 and PALS1. Interacts with MPDZ/MUPP1 and MPP4. In terms of processing, extensively glycosylated. In terms of tissue distribution, preferential expression in retina, also expressed in brain, testis, fetal brain and fetal eye. Expressed at the outer limiting membrane and apical to adherens junctions in the retina.

The protein localises to the apical cell membrane. Its subcellular location is the secreted. The protein resides in the cell projection. It is found in the cilium. It localises to the photoreceptor outer segment. The protein localises to the photoreceptor inner segment. Functionally, plays a role in photoreceptor morphogenesis in the retina. May maintain cell polarization and adhesion. The polypeptide is Protein crumbs homolog 1 (Homo sapiens (Human)).